The following is an 82-amino-acid chain: Small ribosomal subunit protein bS16 (82 aa).

Belongs to the bacterial ribosomal protein bS16 family.

The protein is Small ribosomal subunit protein bS16 of Sodalis glossinidius (strain morsitans).